A 147-amino-acid polypeptide reads, in one-letter code: Large ribosomal subunit protein bL21 (147 aa).

A disordered region spans residues 115-147 (KSIKVGKPTPKSSSKKEETVKKETKPKSEKSTN). Residues 128 to 147 (SKKEETVKKETKPKSEKSTN) show a composition bias toward basic and acidic residues.

It belongs to the bacterial ribosomal protein bL21 family. In terms of assembly, part of the 50S ribosomal subunit. Contacts protein L20.

This protein binds to 23S rRNA in the presence of protein L20. The sequence is that of Large ribosomal subunit protein bL21 from Prochlorococcus marinus (strain MIT 9215).